We begin with the raw amino-acid sequence, 486 residues long: Bifunctional protein HldE (486 aa).

Residues 1-329 are ribokinase; the sequence is MSSRLSGLLD…AALSVAGPVG (329 aa). An ATP-binding site is contributed by 204–207; sequence NAFE. D274 is an active-site residue. Residues 355-486 form a cytidylyltransferase region; it reads FTNGCFDILH…AIIARSETGK (132 aa).

In the N-terminal section; belongs to the carbohydrate kinase PfkB family. The protein in the C-terminal section; belongs to the cytidylyltransferase family. Homodimer.

It carries out the reaction D-glycero-beta-D-manno-heptose 7-phosphate + ATP = D-glycero-beta-D-manno-heptose 1,7-bisphosphate + ADP + H(+). It catalyses the reaction D-glycero-beta-D-manno-heptose 1-phosphate + ATP + H(+) = ADP-D-glycero-beta-D-manno-heptose + diphosphate. The protein operates within nucleotide-sugar biosynthesis; ADP-L-glycero-beta-D-manno-heptose biosynthesis; ADP-L-glycero-beta-D-manno-heptose from D-glycero-beta-D-manno-heptose 7-phosphate: step 1/4. It participates in nucleotide-sugar biosynthesis; ADP-L-glycero-beta-D-manno-heptose biosynthesis; ADP-L-glycero-beta-D-manno-heptose from D-glycero-beta-D-manno-heptose 7-phosphate: step 3/4. Its function is as follows. Catalyzes the phosphorylation of D-glycero-D-manno-heptose 7-phosphate at the C-1 position to selectively form D-glycero-beta-D-manno-heptose-1,7-bisphosphate. Catalyzes the ADP transfer from ATP to D-glycero-beta-D-manno-heptose 1-phosphate, yielding ADP-D-glycero-beta-D-manno-heptose. This is Bifunctional protein HldE from Hyphomonas neptunium (strain ATCC 15444).